Here is a 503-residue protein sequence, read N- to C-terminus: Hexose transporter 1 (503 aa).

Residues 1–26 (MKKSSKEISPSQSLKNGGSDHFFNTS) lie on the Cytoplasmic side of the membrane. A helical membrane pass occupies residues 27-47 (LMYVLAACLASFIFGYQVSVL). The Extracellular portion of the chain corresponds to 48–76 (NTIKNFIVIEFGWCTGNKVECDDSTLKSS). A disulfide bridge connects residues Cys-61 and Cys-68. Residues 77–97 (FLLASVFIGAVVGSGFSDYLV) form a helical membrane-spanning segment. Topologically, residues 98–102 (QHGRR) are cytoplasmic. A helical membrane pass occupies residues 103–123 (FSLLVIYNFFILVSILTSITH). Topologically, residues 124-132 (HFHTILFSR) are extracellular. Residues 133-153 (LLSGFGVGLITVSVPMYISEM) form a helical membrane-spanning segment. The Cytoplasmic portion of the chain corresponds to 154 to 163 (THKDKKGAYG). A helical membrane pass occupies residues 164-184 (VLHQLFITFGILVAVLLGMAM). Gln-167 contacts alpha-D-glucose. A beta-D-glucose-binding site is contributed by Gln-167. Topologically, residues 185–205 (GEAPDAKSVDALGEFQKIWWR) are extracellular. A helical transmembrane segment spans residues 206–226 (LMFFFPCLISILGIVLLTFFY). The Cytoplasmic segment spans residues 227–291 (KEETPYYLFE…RAMQIPSYRN (65 aa)). Residues 292-312 (VILLGCILSGLQQFTGINVLV) form a helical membrane-spanning segment. Residues Gln-303, Gln-304, and Asn-309 each contribute to the alpha-D-glucose site. Gln-303 is a binding site for beta-D-glucose. Asn-309 lines the beta-D-glucose pocket. Residues 313 to 329 (SNSNELYKEFLSNKLIT) are Extracellular-facing. A helical transmembrane segment spans residues 330 to 350 (TLSVIMTVVNFLMTFPAIYIV). Position 339 (Asn-339) interacts with beta-D-glucose. At 351 to 356 (EKLGRK) the chain is on the cytoplasmic side. The chain crosses the membrane as a helical span at residues 357–377 (TLLLCGCAGVTLAAFLPTAIA). Residues 378 to 391 (NQIDRSSDLVRNLS) are Extracellular-facing. A helical membrane pass occupies residues 392 to 412 (IAATFVMIISFAVSYGPVLWI). Trp-411 provides a ligand contact to alpha-D-glucose. The Cytoplasmic portion of the chain corresponds to 413–428 (YLHEMFPSEIKDSAAS). A helical transmembrane segment spans residues 429 to 449 (LASLVNWVCAIIVVFPSDIII). The Extracellular portion of the chain corresponds to 450–454 (KKSPT). Residues 455–475 (ILFFIFSGMSILSFLFIFFFI) form a helical membrane-spanning segment. The Cytoplasmic segment spans residues 476-503 (KETKGGEIGTSPYITMEERQKHMGKSAV).

It belongs to the major facilitator superfamily. Sugar transporter (TC 2.A.1.1) family. As to quaternary structure, homodimer.

It is found in the cell membrane. It catalyses the reaction D-glucose(out) = D-glucose(in). The catalysed reaction is D-fructose(out) = D-fructose(in). It carries out the reaction D-galactose(in) = D-galactose(out). The enzyme catalyses D-mannose(out) = D-mannose(in). It catalyses the reaction D-glucosamine(out) = D-glucosamine(in). The catalysed reaction is D-xylose(out) = D-xylose(in). Inhibited by compound 3361 (3-O-((undec-10-en)-1-yl)-D-glucose). Functionally, sodium-independent facilitative hexose transporter. Can transport D-glucose and D-fructose. Can transport D-mannose, D-galactose, D-xylose and D-glucosamine. This chain is Hexose transporter 1, found in Plasmodium vivax.